The primary structure comprises 1430 residues: Transport and Golgi organization protein 1 (1430 aa).

Positions 1–34 are cleaved as a signal peptide; sequence MRLTNEKATMQPQLSDLALVLGLLICCLPTLTWA. The Extracellular segment spans residues 35 to 796; sequence ATLSDKRLCA…ADKLVDHSQL (762 aa). The 63-residue stretch at 50–112 folds into the SH3 domain; the sequence is QIISMGIAKI…NKDFIMEKKI (63 aa). 5 disordered regions span residues 253-272, 284-303, 318-362, 445-524, and 568-673; these read QEEP…PPLP, DFDY…SQDN, ESIE…SLPT, SDAE…DQQK, and EEAE…TDNH. Acidic residues predominate over residues 284-296; that stretch reads DFDYGDDETDDDS. 3 stretches are compositionally biased toward basic and acidic residues: residues 331–357, 497–524, and 568–588; these read KKTD…KQED, LQEE…DQQK, and EEAE…RSSE. Residues 494–620 adopt a coiled-coil conformation; it reads YKQLQEEQEK…QSNEIVDNNN (127 aa). Polar residues predominate over residues 594 to 621; that stretch reads LSVQEANMQQLNDSVDSQSNEIVDNNNR. Over residues 640–651 the composition is skewed to low complexity; sequence HPSTASHTTPTP. The helical transmembrane segment at 797–817 threads the bilayer; it reads LLCVVIAAISSLFFMFAYYCF. Topologically, residues 818–1430 are cytoplasmic; that stretch reads CNSSQEGALL…SATSRPYSEV (613 aa). 2 positions are modified to phosphoserine: Ser-865 and Ser-868. Positions 869–1245 form a coiled coil; the sequence is NDMVADLKKQ…SLRRKLTTMA (377 aa). Over residues 1105–1114 the composition is skewed to low complexity; that stretch reads SQLQQSSQDV. Disordered regions lie at residues 1105–1126 and 1312–1430; these read SQLQ…QSER and LPPT…YSEV. Positions 1115 to 1126 are enriched in basic and acidic residues; the sequence is EQLKQDFNQSER. The segment covering 1321-1334 has biased composition (pro residues); the sequence is RPPPLGRMRSPPPS. The segment covering 1336-1346 has biased composition (basic and acidic residues); the sequence is RGDRDRERYSD. Ser-1345 and Ser-1348 each carry phosphoserine. Acidic residues predominate over residues 1348–1361; that stretch reads SDYDDYDDDEEDDR. A compositionally biased stretch (basic residues) spans 1364-1380; the sequence is DRRRRHSGSWGRRHRGS. Residues 1387 to 1402 show a composition bias toward polar residues; it reads TYRSLSPSDSRYNYND. 2 positions are modified to phosphoserine: Ser-1390 and Ser-1392. Residues 1408-1417 are compositionally biased toward pro residues; it reads SPPPSPPPVP. Positions 1420 to 1430 are enriched in polar residues; the sequence is RSATSRPYSEV.

Belongs to the MIA/OTOR family. Tango1 subfamily.

Its subcellular location is the golgi apparatus membrane. It localises to the golgi apparatus. The protein localises to the trans-Golgi network. Functionally, required for protein secretion. May participate in cargo loading by binding to COPII coat subunits and guiding SH3-bound proteins into a growing carrier. At basal transitional ER sites in follicle epithelial cells, mediates the exit of basal membrane protein such as vkg, LanB1 and Trol, from the endoplasmic reticulum (ER) to basal Golgi clusters. The protein is Transport and Golgi organization protein 1 of Drosophila melanogaster (Fruit fly).